The primary structure comprises 464 residues: Synaptosomal-associated protein 47 (464 aa).

Residues Gly-20 to Thr-42 form a disordered region. T-SNARE coiled-coil homology domains follow at residues Val-154–Leu-216 and Thr-401–Leu-463.

The protein belongs to the SVAP1 family. In terms of assembly, forms a complex containing SNAP47, VAMP2 and STX1A. Associates with the BLOC-1 complex. Interacts with BLOC1S6.

The protein localises to the endomembrane system. Its subcellular location is the cytoplasm. It localises to the perinuclear region. Plays a role in intracellular membrane fusion. The polypeptide is Synaptosomal-associated protein 47 (SNAP47) (Homo sapiens (Human)).